Reading from the N-terminus, the 117-residue chain is Large ribosomal subunit protein bL20 (117 aa).

It belongs to the bacterial ribosomal protein bL20 family.

Binds directly to 23S ribosomal RNA and is necessary for the in vitro assembly process of the 50S ribosomal subunit. It is not involved in the protein synthesizing functions of that subunit. The protein is Large ribosomal subunit protein bL20 of Pelobacter propionicus (strain DSM 2379 / NBRC 103807 / OttBd1).